Consider the following 179-residue polypeptide: ATP synthase subunit delta (179 aa).

This sequence belongs to the ATPase delta chain family. F-type ATPases have 2 components, F(1) - the catalytic core - and F(0) - the membrane proton channel. F(1) has five subunits: alpha(3), beta(3), gamma(1), delta(1), epsilon(1). F(0) has three main subunits: a(1), b(2) and c(10-14). The alpha and beta chains form an alternating ring which encloses part of the gamma chain. F(1) is attached to F(0) by a central stalk formed by the gamma and epsilon chains, while a peripheral stalk is formed by the delta and b chains.

The protein resides in the cell membrane. Functionally, f(1)F(0) ATP synthase produces ATP from ADP in the presence of a proton or sodium gradient. F-type ATPases consist of two structural domains, F(1) containing the extramembraneous catalytic core and F(0) containing the membrane proton channel, linked together by a central stalk and a peripheral stalk. During catalysis, ATP synthesis in the catalytic domain of F(1) is coupled via a rotary mechanism of the central stalk subunits to proton translocation. This protein is part of the stalk that links CF(0) to CF(1). It either transmits conformational changes from CF(0) to CF(1) or is implicated in proton conduction. This is ATP synthase subunit delta from Clostridium botulinum (strain Kyoto / Type A2).